The primary structure comprises 483 residues: 3-isopropylmalate dehydratase large subunit (483 aa).

[4Fe-4S] cluster-binding residues include cysteine 361, cysteine 424, and cysteine 427.

It belongs to the aconitase/IPM isomerase family. LeuC type 1 subfamily. Heterodimer of LeuC and LeuD. Requires [4Fe-4S] cluster as cofactor.

The catalysed reaction is (2R,3S)-3-isopropylmalate = (2S)-2-isopropylmalate. It participates in amino-acid biosynthesis; L-leucine biosynthesis; L-leucine from 3-methyl-2-oxobutanoate: step 2/4. Catalyzes the isomerization between 2-isopropylmalate and 3-isopropylmalate, via the formation of 2-isopropylmaleate. The protein is 3-isopropylmalate dehydratase large subunit of Polaromonas naphthalenivorans (strain CJ2).